The chain runs to 749 residues: 1,4-alpha-glucan branching enzyme GlgB (749 aa).

Asp-415 serves as the catalytic Nucleophile. Glu-468 acts as the Proton donor in catalysis.

This sequence belongs to the glycosyl hydrolase 13 family. GlgB subfamily. In terms of assembly, monomer.

The catalysed reaction is Transfers a segment of a (1-&gt;4)-alpha-D-glucan chain to a primary hydroxy group in a similar glucan chain.. The protein operates within glycan biosynthesis; glycogen biosynthesis. Its function is as follows. Catalyzes the formation of the alpha-1,6-glucosidic linkages in glycogen by scission of a 1,4-alpha-linked oligosaccharide from growing alpha-1,4-glucan chains and the subsequent attachment of the oligosaccharide to the alpha-1,6 position. The protein is 1,4-alpha-glucan branching enzyme GlgB of Nitrosococcus oceani (strain ATCC 19707 / BCRC 17464 / JCM 30415 / NCIMB 11848 / C-107).